The primary structure comprises 162 residues: MHKEPMTKYGYEKLSKELEYLKTTARPEVAKEIDSARELGDLKENAEYHAAKEKQSHIERRIAELSDILSRAVVVDPKEHAHNRVAFGSTVYLIDVDTDEKEKYTIVGAPEANPDKGLISYHSPLAKALIGKEVGDEVEVNLPGGVKVYEIDKICYEDICFS.

Residues Glu44–Ala72 are a coiled coil.

This sequence belongs to the GreA/GreB family.

Necessary for efficient RNA polymerase transcription elongation past template-encoded arresting sites. The arresting sites in DNA have the property of trapping a certain fraction of elongating RNA polymerases that pass through, resulting in locked ternary complexes. Cleavage of the nascent transcript by cleavage factors such as GreA or GreB allows the resumption of elongation from the new 3'terminus. GreA releases sequences of 2 to 3 nucleotides. This Nautilia profundicola (strain ATCC BAA-1463 / DSM 18972 / AmH) protein is Transcription elongation factor GreA.